Here is a 579-residue protein sequence, read N- to C-terminus: YTH domain-containing family protein 2 (579 aa).

Residues 1–45 (MSASSLLEQRPKGQGNKVQNGSVHQKDGLNDDDFEPYLSPQARPN) are disordered. Serine 2 carries the post-translational modification N-acetylserine. A phosphoserine mark is found at serine 2, serine 4, serine 5, serine 22, serine 39, and serine 196. Residues 2 to 384 (SASSLLEQRP…QAGSGSTPSE (383 aa)) form a localization to mRNA processing bodies (P-bodies) region. The interval 247–387 (AKQQPKLKTK…SGSTPSEPHP (141 aa)) is disordered. Polar residues predominate over residues 291 to 316 (ALVQNIGQPTQGSPQPVGQQANNSPP). A compositionally biased stretch (low complexity) spans 337-349 (AQLSVQQQAAQPT). Residue serine 359 is modified to Phosphoserine. A compositionally biased stretch (gly residues) spans 359–371 (SGFGHNGVDGNGV). Residues 372–383 (GQSQAGSGSTPS) are compositionally biased toward polar residues. The interaction with m6A-containing mRNAs stretch occupies residues 385–579 (PHPVLEKLRS…VKKERQGRGK (195 aa)). Serine 394 carries the phosphoserine modification. Residues 410 to 544 (GRVFIIKSYS…EKAKQVLKII (135 aa)) form the YTH domain. RNA contacts are provided by residues 416 to 418 (KSY), aspartate 422, 432 to 433 (WC), asparagine 462, tryptophan 486, and tryptophan 491.

The protein belongs to the YTHDF family. YTHDF2 subfamily. In terms of assembly, interacts with CNOT1; interaction is direct and promotes recruitment of the CCR4-NOT complex. Interacts with YTHDF3. Interacts with RIDA/HRSP12; interaction leads to recruitment of the ribonuclease P/MRP complex. Post-translationally, ubiquitinated by the SCF(SKP2) complex, leading to its degradation. In terms of tissue distribution, highly expressed in induced pluripotent stem cells (iPSCs) and down-regulated during neural differentiation.

The protein resides in the cytoplasm. The protein localises to the cytosol. Its subcellular location is the P-body. It localises to the stress granule. It is found in the nucleus. Functionally, specifically recognizes and binds N6-methyladenosine (m6A)-containing RNAs, and regulates their stability. M6A is a modification present at internal sites of mRNAs and some non-coding RNAs and plays a role in mRNA stability and processing. Acts as a regulator of mRNA stability by promoting degradation of m6A-containing mRNAs via interaction with the CCR4-NOT and ribonuclease P/MRP complexes, depending on the context. The YTHDF paralogs (YTHDF1, YTHDF2 and YTHDF3) share m6A-containing mRNAs targets and act redundantly to mediate mRNA degradation and cellular differentiation. M6A-containing mRNAs containing a binding site for RIDA/HRSP12 (5'-GGUUC-3') are preferentially degraded by endoribonucleolytic cleavage: cooperative binding of RIDA/HRSP12 and YTHDF2 to transcripts leads to recruitment of the ribonuclease P/MRP complex. Other m6A-containing mRNAs undergo deadenylation via direct interaction between YTHDF2 and CNOT1, leading to recruitment of the CCR4-NOT and subsequent deadenylation of m6A-containing mRNAs. Required maternally to regulate oocyte maturation: probably acts by binding to m6A-containing mRNAs, thereby regulating maternal transcript dosage during oocyte maturation, which is essential for the competence of oocytes to sustain early zygotic development. Also required during spermatogenesis: regulates spermagonial adhesion by promoting degradation of m6A-containing transcripts coding for matrix metallopeptidases. Also involved in hematopoietic stem cells specification by binding to m6A-containing mRNAs, leading to promote their degradation. Also acts as a regulator of neural development by promoting m6A-dependent degradation of neural development-related mRNA targets. Inhibits neural specification of induced pluripotent stem cells by binding to methylated neural-specific mRNAs and promoting their degradation, thereby restraining neural differentiation. Regulates circadian regulation of hepatic lipid metabolism: acts by promoting m6A-dependent degradation of PPARA transcripts. Regulates the innate immune response to infection by inhibiting the type I interferon response: acts by binding to m6A-containing IFNB transcripts and promoting their degradation. May also act as a promoter of cap-independent mRNA translation following heat shock stress: upon stress, relocalizes to the nucleus and specifically binds mRNAs with some m6A methylation mark at their 5'-UTR, protecting demethylation of mRNAs by FTO, thereby promoting cap-independent mRNA translation. Regulates mitotic entry by promoting the phase-specific m6A-dependent degradation of WEE1 transcripts. Promotes formation of phase-separated membraneless compartments, such as P-bodies or stress granules, by undergoing liquid-liquid phase separation upon binding to mRNAs containing multiple m6A-modified residues: polymethylated mRNAs act as a multivalent scaffold for the binding of YTHDF proteins, juxtaposing their disordered regions and thereby leading to phase separation. The resulting mRNA-YTHDF complexes then partition into different endogenous phase-separated membraneless compartments, such as P-bodies, stress granules or neuronal RNA granules. May also recognize and bind RNAs modified by C5-methylcytosine (m5C) and act as a regulator of rRNA processing. (Microbial infection) Promotes viral gene expression and replication of polyomavirus SV40: acts by binding to N6-methyladenosine (m6A)-containing viral RNAs. In terms of biological role, (Microbial infection) Promotes viral gene expression and virion production of kaposis sarcoma-associated herpesvirus (KSHV) at some stage of the KSHV life cycle (in iSLK.219 and iSLK.BAC16 cells). Acts by binding to N6-methyladenosine (m6A)-containing viral RNAs. This is YTH domain-containing family protein 2 from Homo sapiens (Human).